Consider the following 380-residue polypeptide: MAKRDYYEVLGVAKNASDDEIKKAYRKLAMKHHPDRNPGNKDAEGHFKEVKEAYEMLSDSQKRAAYDQYGHAGVDPNMGGAGAQGFGGFADAFGDIFGDIFGQAAGGAARGGGGRAGPQVYRGADLRYSMEITLEQAAHGYDTQIRVPSWVSCEVCHGSGAKPGTKPETCPTCSGSGSVRMSQGFFSIQQTCPKCHGTGTYIPDPCGHCHGAGKVKETKTLEVKIPAGIDDGMRIRSAGNGEPGINGGPSGDLYVEIHIKQHSVFERDGDDLHCQMPIPFTTAALGGEIEVPTLAGRASFTVPEGTQSGKTFRLRGKGIKGLRSSIAGDLYVHVQVETPVKLTEPQRDLLKQFEKALVEGGSRHSPQSKSWFDRVKSFFD.

The region spanning 5 to 70 (DYYEVLGVAK…QKRAAYDQYG (66 aa)) is the J domain. The segment at 140–218 (GYDTQIRVPS…CHGAGKVKET (79 aa)) adopts a CR-type zinc-finger fold. 8 residues coordinate Zn(2+): Cys153, Cys156, Cys170, Cys173, Cys192, Cys195, Cys206, and Cys209. CXXCXGXG motif repeat units follow at residues 153 to 160 (CEVCHGSG), 170 to 177 (CPTCSGSG), 192 to 199 (CPKCHGTG), and 206 to 213 (CGHCHGAG).

Belongs to the DnaJ family. As to quaternary structure, homodimer. Zn(2+) serves as cofactor.

Its subcellular location is the cytoplasm. Its function is as follows. Participates actively in the response to hyperosmotic and heat shock by preventing the aggregation of stress-denatured proteins and by disaggregating proteins, also in an autonomous, DnaK-independent fashion. Unfolded proteins bind initially to DnaJ; upon interaction with the DnaJ-bound protein, DnaK hydrolyzes its bound ATP, resulting in the formation of a stable complex. GrpE releases ADP from DnaK; ATP binding to DnaK triggers the release of the substrate protein, thus completing the reaction cycle. Several rounds of ATP-dependent interactions between DnaJ, DnaK and GrpE are required for fully efficient folding. Also involved, together with DnaK and GrpE, in the DNA replication of plasmids through activation of initiation proteins. This is Chaperone protein DnaJ from Paraburkholderia xenovorans (strain LB400).